Here is a 156-residue protein sequence, read N- to C-terminus: Aspartate carbamoyltransferase regulatory chain (156 aa).

Residues C109, C114, C140, and C143 each coordinate Zn(2+).

Belongs to the PyrI family. In terms of assembly, contains catalytic and regulatory chains. Zn(2+) is required as a cofactor.

Functionally, involved in allosteric regulation of aspartate carbamoyltransferase. This chain is Aspartate carbamoyltransferase regulatory chain, found in Methanosarcina acetivorans (strain ATCC 35395 / DSM 2834 / JCM 12185 / C2A).